The sequence spans 754 residues: tRNA 5-methylaminomethyl-2-thiouridine biosynthesis bifunctional protein MnmC (754 aa).

The tRNA (mnm(5)s(2)U34)-methyltransferase stretch occupies residues 1-320; it reads MPSCYEHSAQ…RRQAVNNSDS (320 aa). The tract at residues 324 to 754 is FAD-dependent cmnm(5)s(2)U34 oxidoreductase; it reads IGGGIAGACL…RKLLKGKALC (431 aa).

The protein in the N-terminal section; belongs to the methyltransferase superfamily. tRNA (mnm(5)s(2)U34)-methyltransferase family. It in the C-terminal section; belongs to the DAO family. The cofactor is FAD.

Its subcellular location is the cytoplasm. It catalyses the reaction 5-aminomethyl-2-thiouridine(34) in tRNA + S-adenosyl-L-methionine = 5-methylaminomethyl-2-thiouridine(34) in tRNA + S-adenosyl-L-homocysteine + H(+). In terms of biological role, catalyzes the last two steps in the biosynthesis of 5-methylaminomethyl-2-thiouridine (mnm(5)s(2)U) at the wobble position (U34) in tRNA. Catalyzes the FAD-dependent demodification of cmnm(5)s(2)U34 to nm(5)s(2)U34, followed by the transfer of a methyl group from S-adenosyl-L-methionine to nm(5)s(2)U34, to form mnm(5)s(2)U34. This Shewanella denitrificans (strain OS217 / ATCC BAA-1090 / DSM 15013) protein is tRNA 5-methylaminomethyl-2-thiouridine biosynthesis bifunctional protein MnmC.